Here is a 304-residue protein sequence, read N- to C-terminus: Cell surface-binding protein OPG105 (304 aa).

The Alpha-carbonic anhydrase domain occupies 1–235 (MPQQLSPINI…NDDTQVYYSG (235 aa)). Residues 1–275 (MPQQLSPINI…YQKYIEGNKT (275 aa)) lie on the Virion surface side of the membrane. A helical transmembrane segment spans residues 276 to 294 (FAIIAIVFVFILTAILFLM). Residues 295–304 (SRRYSREKQN) are Intravirion-facing.

The protein belongs to the alpha-carbonic anhydrase family. As to quaternary structure, homodimer; disulfide-linked. Post-translationally, apparently non-glycosylated.

Its subcellular location is the virion membrane. Binds to chondroitin sulfate on the cell surface to provide virion attachment to target cell. The polypeptide is Cell surface-binding protein OPG105 (OPG105) (Rabbitpox virus (strain Utrecht) (RPV)).